Here is a 187-residue protein sequence, read N- to C-terminus: Nodulin-related protein 1 (187 aa).

Met1 carries the N-acetylmethionine modification. Disordered stretches follow at residues 1 to 66 (MDFF…ATNA) and 132 to 176 (YETS…HGFG). Positions 7-48 (QVKKKFSDKKPESSDPEPNHNKNKPGHTEPTTHKPGHGEPTT) are enriched in basic and acidic residues. A compositionally biased stretch (gly residues) spans 142–158 (GGTGSHGNVGGHGGGAG).

Interacts with RPS2. In terms of tissue distribution, expressed in roots, leaves, flowers and siliques.

Functionally, prevents accumulation of abscisic acid (ABA) after heat treatment, thus reducing thermotolerance. May be a negative regulator of the ABA signaling/synthesis pathway. Required for defense responses against avirulent bacteria such as P.syringae pv. tomato DC3000 (avrRpt2). This Arabidopsis thaliana (Mouse-ear cress) protein is Nodulin-related protein 1.